The primary structure comprises 179 residues: Low molecular weight phosphotyrosine protein phosphatase (179 aa).

Cysteine 15 acts as the Nucleophile in catalysis. The active site involves arginine 21. Residue aspartate 148 is the Proton donor of the active site.

The protein belongs to the low molecular weight phosphotyrosine protein phosphatase family.

The protein localises to the cytoplasm. It carries out the reaction O-phospho-L-tyrosyl-[protein] + H2O = L-tyrosyl-[protein] + phosphate. The catalysed reaction is a phosphate monoester + H2O = an alcohol + phosphate. In terms of biological role, acts on tyrosine phosphorylated proteins, low-MW aryl phosphates and natural and synthetic acyl phosphates. The chain is Low molecular weight phosphotyrosine protein phosphatase (acp1) from Dictyostelium discoideum (Social amoeba).